The sequence spans 2395 residues: Centrosomal protein of 295 kDa (2395 aa).

The segment at 1–540 (MKRKVMNGKL…KQADHLEVRP (540 aa)) is necessary for centriole targeting and microtubule association. Serine 13 bears the Phosphoserine mark. Coiled coils occupy residues 53-84 (QRRN…LEKL), 114-148 (AERK…HIKA), 209-277 (DAHL…KRQT), 488-538 (ARHK…HLEV), and 567-592 (QQNR…VLKE). Disordered regions lie at residues 602-643 (LIPD…PVQP), 660-681 (GHIP…SQER), and 735-764 (SDSQ…LMPE). Residue serine 634 is modified to Phosphoserine. The segment covering 735 to 750 (SDSQQISSEDSENISS) has biased composition (low complexity). Residues 817–848 (GQLELQKKVLQERQEAQEKLLSCTQKELEEQT) adopt a coiled-coil conformation. 3 disordered regions span residues 864–893 (SLPS…SMDN), 966–986 (ADTQ…KGLL), and 1212–1272 (VDPE…SKVT). The segment covering 1219-1250 (FQFSPQTQENRSSQQTGFSSFTPSLRQPSCVS) has biased composition (polar residues). A coiled-coil region spans residues 1444 to 1488 (HDDLQALQQQLDVHREAIRSCQDIQEELLLQRLNKLEQRVSSKQI). Serine 1565 bears the Phosphoserine mark. Low complexity predominate over residues 1677 to 1692 (PWGDSSQGSSSGDQPG). Disordered regions lie at residues 1677–1715 (PWGD…RASK), 1819–1845 (SEEE…ETQE), 1875–1899 (ESFS…GSLS), 1989–2013 (DLSS…SSEK), and 2354–2395 (NKTP…SQCI). Residues 1697–1710 (HAEHSGESLGKELS) show a composition bias toward basic and acidic residues. Over residues 1880–1894 (QTEHQEQESSSKEEE) the composition is skewed to basic and acidic residues. The segment at 2329 to 2395 (SLGEAFMKRK…TAKRNRSQCI (67 aa)) is ALMS motif. The span at 2376 to 2388 (HLKEAVSGDETAK) shows a compositional bias: basic and acidic residues.

As to quaternary structure, interacts (via ALMS motif) with microtubules; this interaction is direct.

Its subcellular location is the cytoplasm. It localises to the cytoskeleton. The protein resides in the microtubule organizing center. The protein localises to the centrosome. It is found in the centriole. Its subcellular location is the spindle. Functionally, centriole-enriched microtubule-binding protein involved in centriole biogenesis. Essential for the generation of the distal portion of new-born centrioles in a CPAP- and CEP120-mediated elongation dependent manner during the cell cycle S/G2 phase after formation of the initiating cartwheel structure. Required for the recruitment of centriolar proteins, such as POC1B, POC5 and CEP135, into the distal portion of centrioles. Also required for centriole-to-centrosome conversion during mitotic progression, but is dispensable for cartwheel removal or centriole disengagement. Binds to and stabilizes centriolar microtubule. May be involved in ciliogenesis. This Rattus norvegicus (Rat) protein is Centrosomal protein of 295 kDa.